The sequence spans 303 residues: Signal recognition particle receptor FtsY (303 aa).

GTP is bound by residues 108–115, 190–194, and 254–257; these read GVNGAGKT, DTAGR, and TKLD.

The protein belongs to the GTP-binding SRP family. FtsY subfamily. In terms of assembly, part of the signal recognition particle protein translocation system, which is composed of SRP and FtsY. SRP is a ribonucleoprotein composed of Ffh and a 4.5S RNA molecule.

It is found in the cell inner membrane. The protein resides in the cytoplasm. The enzyme catalyses GTP + H2O = GDP + phosphate + H(+). Involved in targeting and insertion of nascent membrane proteins into the cytoplasmic membrane. Acts as a receptor for the complex formed by the signal recognition particle (SRP) and the ribosome-nascent chain (RNC). Interaction with SRP-RNC leads to the transfer of the RNC complex to the Sec translocase for insertion into the membrane, the hydrolysis of GTP by both Ffh and FtsY, and the dissociation of the SRP-FtsY complex into the individual components. The protein is Signal recognition particle receptor FtsY of Rickettsia conorii (strain ATCC VR-613 / Malish 7).